A 126-amino-acid chain; its full sequence is Aspartate 1-decarboxylase (126 aa).

Ser-25 acts as the Schiff-base intermediate with substrate; via pyruvic acid in catalysis. At Ser-25 the chain carries Pyruvic acid (Ser). Thr-57 is a substrate binding site. The active-site Proton donor is Tyr-58. Position 73–75 (73–75 (GAA)) interacts with substrate.

Belongs to the PanD family. In terms of assembly, heterooctamer of four alpha and four beta subunits. Pyruvate serves as cofactor. Post-translationally, is synthesized initially as an inactive proenzyme, which is activated by self-cleavage at a specific serine bond to produce a beta-subunit with a hydroxyl group at its C-terminus and an alpha-subunit with a pyruvoyl group at its N-terminus.

The protein resides in the cytoplasm. The catalysed reaction is L-aspartate + H(+) = beta-alanine + CO2. Its pathway is cofactor biosynthesis; (R)-pantothenate biosynthesis; beta-alanine from L-aspartate: step 1/1. Its function is as follows. Catalyzes the pyruvoyl-dependent decarboxylation of aspartate to produce beta-alanine. This is Aspartate 1-decarboxylase from Escherichia coli O6:H1 (strain CFT073 / ATCC 700928 / UPEC).